Here is an 804-residue protein sequence, read N- to C-terminus: Leucine--tRNA ligase (804 aa).

Positions 40–51 (PYPSGAGLHVGH) match the 'HIGH' region motif. The short motif at 576 to 580 (KMSKS) is the 'KMSKS' region element. Lysine 579 serves as a coordination point for ATP.

This sequence belongs to the class-I aminoacyl-tRNA synthetase family.

Its subcellular location is the cytoplasm. It catalyses the reaction tRNA(Leu) + L-leucine + ATP = L-leucyl-tRNA(Leu) + AMP + diphosphate. This chain is Leucine--tRNA ligase, found in Staphylococcus saprophyticus subsp. saprophyticus (strain ATCC 15305 / DSM 20229 / NCIMB 8711 / NCTC 7292 / S-41).